The chain runs to 450 residues: UDP-N-acetylmuramoylalanine--D-glutamate ligase (450 aa).

119–125 serves as a coordination point for ATP; it reads GSNGKTT.

The protein belongs to the MurCDEF family.

It localises to the cytoplasm. It carries out the reaction UDP-N-acetyl-alpha-D-muramoyl-L-alanine + D-glutamate + ATP = UDP-N-acetyl-alpha-D-muramoyl-L-alanyl-D-glutamate + ADP + phosphate + H(+). It functions in the pathway cell wall biogenesis; peptidoglycan biosynthesis. In terms of biological role, cell wall formation. Catalyzes the addition of glutamate to the nucleotide precursor UDP-N-acetylmuramoyl-L-alanine (UMA). The sequence is that of UDP-N-acetylmuramoylalanine--D-glutamate ligase from Streptococcus pneumoniae serotype 4 (strain ATCC BAA-334 / TIGR4).